A 228-amino-acid chain; its full sequence is Orotidine 5'-phosphate decarboxylase (228 aa).

Substrate contacts are provided by residues D8, K30, 59 to 68 (DLKLHDIPNT), T118, R178, Q187, G207, and R208. K61 serves as the catalytic Proton donor.

Belongs to the OMP decarboxylase family. Type 1 subfamily. As to quaternary structure, homodimer.

It carries out the reaction orotidine 5'-phosphate + H(+) = UMP + CO2. Its pathway is pyrimidine metabolism; UMP biosynthesis via de novo pathway; UMP from orotate: step 2/2. Functionally, catalyzes the decarboxylation of orotidine 5'-monophosphate (OMP) to uridine 5'-monophosphate (UMP). This is Orotidine 5'-phosphate decarboxylase from Wolinella succinogenes (strain ATCC 29543 / DSM 1740 / CCUG 13145 / JCM 31913 / LMG 7466 / NCTC 11488 / FDC 602W) (Vibrio succinogenes).